Here is a 426-residue protein sequence, read N- to C-terminus: Serine--tRNA ligase (426 aa).

Residue 230–232 participates in L-serine binding; the sequence is TAE. Residue 261–263 coordinates ATP; it reads RSE. An L-serine-binding site is contributed by glutamate 284. 348-351 is a binding site for ATP; it reads EISS. Serine 384 serves as a coordination point for L-serine.

The protein belongs to the class-II aminoacyl-tRNA synthetase family. Type-1 seryl-tRNA synthetase subfamily. Homodimer. The tRNA molecule binds across the dimer.

It is found in the cytoplasm. It carries out the reaction tRNA(Ser) + L-serine + ATP = L-seryl-tRNA(Ser) + AMP + diphosphate + H(+). The enzyme catalyses tRNA(Sec) + L-serine + ATP = L-seryl-tRNA(Sec) + AMP + diphosphate + H(+). It participates in aminoacyl-tRNA biosynthesis; selenocysteinyl-tRNA(Sec) biosynthesis; L-seryl-tRNA(Sec) from L-serine and tRNA(Sec): step 1/1. Catalyzes the attachment of serine to tRNA(Ser). Is also able to aminoacylate tRNA(Sec) with serine, to form the misacylated tRNA L-seryl-tRNA(Sec), which will be further converted into selenocysteinyl-tRNA(Sec). The protein is Serine--tRNA ligase of Streptococcus mutans serotype c (strain ATCC 700610 / UA159).